The following is a 75-amino-acid chain: MPLPKISEARELSDEKLSDEIVAIKRQLFQLRLQKATRQLEKPHQFRQARHRLAQLLTLETERKRAASQSAKEEK.

Belongs to the universal ribosomal protein uL29 family.

This is Large ribosomal subunit protein uL29 from Nostoc punctiforme (strain ATCC 29133 / PCC 73102).